The following is a 424-amino-acid chain: D-inositol 3-phosphate glycosyltransferase (424 aa).

1D-myo-inositol 3-phosphate-binding positions include His-9, 20 to 25, Lys-78, Tyr-110, Thr-134, and Arg-154; that span reads DAGGMN. Gly-23 contributes to the UDP-N-acetyl-alpha-D-glucosamine binding site. UDP-N-acetyl-alpha-D-glucosamine contacts are provided by Arg-231, Lys-236, and Arg-295. Residues Tyr-304, Gln-305, and Ala-307 each contribute to the Mg(2+) site. The UDP-N-acetyl-alpha-D-glucosamine site is built by Glu-317 and Glu-325. Thr-331 provides a ligand contact to Mg(2+).

The protein belongs to the glycosyltransferase group 1 family. MshA subfamily. As to quaternary structure, homodimer.

The enzyme catalyses 1D-myo-inositol 3-phosphate + UDP-N-acetyl-alpha-D-glucosamine = 1D-myo-inositol 2-acetamido-2-deoxy-alpha-D-glucopyranoside 3-phosphate + UDP + H(+). Functionally, catalyzes the transfer of a N-acetyl-glucosamine moiety to 1D-myo-inositol 3-phosphate to produce 1D-myo-inositol 2-acetamido-2-deoxy-glucopyranoside 3-phosphate in the mycothiol biosynthesis pathway. The protein is D-inositol 3-phosphate glycosyltransferase of Corynebacterium urealyticum (strain ATCC 43042 / DSM 7109).